The primary structure comprises 80 residues: Defensin-like protein CAL1 (80 aa).

The signal sequence occupies residues 1–31 (MAPSRRMVASAFLLLAILVATEMGTTKVAEA). 4 disulfide bridges follow: cysteine 34–cysteine 80, cysteine 45–cysteine 65, cysteine 51–cysteine 74, and cysteine 55–cysteine 76.

It belongs to the DEFL family. In terms of tissue distribution, expressed preferentially in root exodermis and xylem parenchyma cells in vasculature of root and flag leaf sheath.

The protein localises to the secreted. Its subcellular location is the extracellular space. Plant defensin-like protein involved in accumulation of cadmium (Cd) in rice leaves. Mediates Cd efflux from cytosol into extracellular spaces via chelation. This drives Cd secretion from xylem parenchyma cells into the xylem vessels, hence lowering Cd levels in cytosol meanwhile promoting Cd translocation from roots to shoots. In Oryza sativa subsp. japonica (Rice), this protein is Defensin-like protein CAL1.